The sequence spans 513 residues: 2-isopropylmalate synthase (513 aa).

Positions 5-268 constitute a Pyruvate carboxyltransferase domain; that stretch reads LIIFDTTLRD…DVGVDTSQIV (264 aa). Mn(2+) is bound by residues Asp14, His202, His204, and Asn239. A regulatory domain region spans residues 394–513; sequence RFISLSQRSE…KAVQKINPQI (120 aa).

Belongs to the alpha-IPM synthase/homocitrate synthase family. LeuA type 1 subfamily. Homodimer. The cofactor is Mn(2+).

It localises to the cytoplasm. It catalyses the reaction 3-methyl-2-oxobutanoate + acetyl-CoA + H2O = (2S)-2-isopropylmalate + CoA + H(+). The protein operates within amino-acid biosynthesis; L-leucine biosynthesis; L-leucine from 3-methyl-2-oxobutanoate: step 1/4. Functionally, catalyzes the condensation of the acetyl group of acetyl-CoA with 3-methyl-2-oxobutanoate (2-ketoisovalerate) to form 3-carboxy-3-hydroxy-4-methylpentanoate (2-isopropylmalate). The protein is 2-isopropylmalate synthase of Cupriavidus pinatubonensis (strain JMP 134 / LMG 1197) (Cupriavidus necator (strain JMP 134)).